Here is a 491-residue protein sequence, read N- to C-terminus: (S)-canadine synthase (491 aa).

The helical transmembrane segment at 6-26 (LLVCATVAIVFATTTIIRILF) threads the bilayer. Cys434 contacts heme.

Belongs to the cytochrome P450 family. The cofactor is heme. Expressed at low levels in roots.

Its subcellular location is the endoplasmic reticulum membrane. It is found in the microsome membrane. The catalysed reaction is (S)-tetrahydrocolumbamine + reduced [NADPH--hemoprotein reductase] + O2 = (S)-canadine + oxidized [NADPH--hemoprotein reductase] + 2 H2O + H(+). Functionally, involved in the last but one step of the biosynthesis of berberine, an antimicrobial benzylisoquinoline alkaloid. Converts (S)-tetrahydrocolumbamine (THC) to (S)-tetrahydroberberine (THB) also called (S)-canadine. The polypeptide is (S)-canadine synthase (CYP719A1) (Coptis japonica (Japanese goldthread)).